Consider the following 202-residue polypeptide: MVPQGWSLAWVSVLYVSVIPSLHIINNENSVFIGTHSETELRHWLIFVKMAQRSGTAWWRMASVPINAYFERDIAFLFNPRCVIETALGSKILCRYNKNIGVVFVDNDTTCNVSFPSGVQLQLLNQSVMESIRTKTYVVDYARKTTERGDCFISVAFCRKERRRFLPRYERFVYYCISVYLFAVAVFCSCWFALDPLFNMWA.

2 consecutive transmembrane segments (helical) span residues 5-25 (GWSL…LHII) and 172-192 (FVYY…SCWF).

It is found in the host membrane. The protein is Protein U22 (U22) of Human herpesvirus 6B (strain Z29) (HHV-6 variant B).